We begin with the raw amino-acid sequence, 1162 residues long: MLVTPLLLVTLLCALCSAVLYDSSSYVYYYQSAFRPPSGWHLQGGAYAVVNISSEFNNAGSSSGCTVGIIHGGRVVNASSIAMTAPSSGMAWSSSQFCTAHCNFSDTTVFVTHCYKHGGCPLTGMLQQNLIRVSAMKNGQLFYNLTVSVAKYPTFRSFQCVNNLTSVYLNGDLVYTSNETIDVTSAGVYFKAGGPITYKVMREVKALAYFVNGTAQDVILCDGSPRGLLACQYNTGNFSDGFYPFTNSSLVKQKFIVYRENSVNTTCTLHNFIFHNETGANPNPSGVQNIQTYQTKTAQSGYYNFNFSFLSSFVYKESNFMYGSYHPSCKFRLETINNGLWFNSLSVSIAYGPLQGGCKQSVFKGRATCCYAYSYGGPSLCKGVYSGELDHNFECGLLVYVTKSGGSRIQTATEPPVITQNNYNNITLNTCVDYNIYGRTGQGFITNVTDSAVSYNYLADAGLAILDTSGSIDIFVVQGEYGLNYYKVNPCEDVNQQFVVSGGKLVGILTSRNETGSQLLENQFYIKITNGTRRFRRSITENVANCPYVSYGKFCIKPDGSIATIVPKQLEQFVAPLFNVTENVLIPNSFNLTVTDEYIQTRMDKVQINCLQYVCGSSLDCRKLFQQYGPVCDNILSVVNSVGQKEDMELLNFYSSTKPAGFNTPVLSNVSTGEFNISLLLTNPSSRRKRSLIEDLLFTSVESVGLPTNDAYKNCTAGPLGFFKDLACAREYNGLLVLPPIITAEMQALYTSSLVASMAFGGITAAGAIPFATQLQARINHLGITQSLLLKNQEKIAASFNKAIGHMQEGFRSTSLALQQIQDVVSKQSAILTETMASLNKNFGAISSVIQEIYQQFDAIQANAQVDRLITGRLSSLSVLASAKQAEYIRVSQQRELATQKINECVKSQSIRYSFCGNGRHVLTIPQNAPNGIVFIHFSYTPDSFVNVTAIVGFCVKPANASQYAIVPANGRGIFIQVNGSYYITARDMYMPRAITAGDVVTLTSCQANYVSVNKTVITTFVDNDDFDFNDELSKWWNDTKHELPDFDKFNYTVPILDIDSEIDRIQGVIQGLNDSLIDLEKLSILKTYIKWPWYVWLAIAFATIIFILILGWVFFMTGCCGCCCGCFGIMPLMSKCGKKSSYYTTFDNDVVTEQYRPKKSV.

The signal sequence occupies residues methionine 1 to alanine 18. Over valine 19–tyrosine 1095 the chain is Extracellular. Asparagine 51, asparagine 77, asparagine 103, asparagine 144, asparagine 163, asparagine 178, asparagine 212, asparagine 237, asparagine 247, asparagine 264, asparagine 276, asparagine 306, asparagine 425, asparagine 447, asparagine 513, asparagine 530, asparagine 579, asparagine 591, asparagine 669, asparagine 676, and asparagine 714 each carry an N-linked (GlcNAc...) asparagine; by host glycan. The interval isoleucine 769–leucine 874 is heptad repeat 1 (HR1). Residues glutamine 822–valine 866 are a coiled coil. N-linked (GlcNAc...) asparagine; by host glycans are attached at residues asparagine 947, asparagine 960, asparagine 979, asparagine 1014, asparagine 1038, asparagine 1051, and asparagine 1074. The heptad repeat 2 (HR2) stretch occupies residues asparagine 1024–isoleucine 1105. A coiled-coil region spans residues proline 1055 to leucine 1083. Residues valine 1096–phenylalanine 1116 form a helical membrane-spanning segment. Over methionine 1117–valine 1162 the chain is Cytoplasmic. The Di-lysine motif signature appears at lysine 1159–valine 1162.

This sequence belongs to the gammacoronaviruses spike protein family. In terms of assembly, homotrimer; each monomer consists of a S1 and a S2 subunit. The resulting peplomers protrude from the virus surface as spikes. Specific enzymatic cleavages in vivo yield mature proteins. The precursor is processed into S1 and S2 by host cell furin or furin-like protease to yield the mature S1 and S2 proteins. The cleavage site between S1 and S2 requires the optimal sequence [KR]-X-[KR]-R. Additionally, a second cleavage leads to the release of a fusion peptide after viral attachment to host cell receptor.

The protein localises to the virion membrane. The protein resides in the host endoplasmic reticulum-Golgi intermediate compartment membrane. Functionally, attaches the virion to the host cell membrane by interacting with sialic acids, initiating the infection. Mediates fusion of the virion and cellular membranes by acting as a class I viral fusion protein. Under the current model, the protein has at least 3 conformational states: pre-fusion native state, pre-hairpin intermediate state, and post-fusion hairpin state. During viral and target cell membrane fusion, the coiled coil regions (heptad repeats) assume a trimer-of-hairpins structure, positioning the fusion peptide in close proximity to the C-terminal region of the ectodomain. The formation of this structure appears to drive apposition and subsequent fusion of viral and target cell membranes. In terms of biological role, acts as a viral fusion peptide after S2 cleavage occurring upon virus endocytosis. The polypeptide is Spike glycoprotein (Avian infectious bronchitis virus (strain Beaudette) (IBV)).